A 243-amino-acid chain; its full sequence is Small ribosomal subunit protein uS3 (243 aa).

Residues 39–110 (IRTFIQKKYG…QVRINVVEVE (72 aa)) enclose the KH type-2 domain. The segment at 216-243 (KTIPVGASPKRKAGRRPQQFEDRSNENS) is disordered. Over residues 233 to 243 (QQFEDRSNENS) the composition is skewed to basic and acidic residues.

The protein belongs to the universal ribosomal protein uS3 family. Part of the 30S ribosomal subunit. Forms a tight complex with proteins S10 and S14.

In terms of biological role, binds the lower part of the 30S subunit head. Binds mRNA in the 70S ribosome, positioning it for translation. The chain is Small ribosomal subunit protein uS3 from Prochlorococcus marinus (strain MIT 9312).